Consider the following 182-residue polypeptide: Endoribonuclease YbeY (182 aa).

Zn(2+)-binding residues include His120, His124, and His130. A disordered region spans residues 157 to 182; the sequence is RGVSFAPKPTGAGAFPSAADRDDTQN.

It belongs to the endoribonuclease YbeY family. Zn(2+) is required as a cofactor.

The protein resides in the cytoplasm. Its function is as follows. Single strand-specific metallo-endoribonuclease involved in late-stage 70S ribosome quality control and in maturation of the 3' terminus of the 16S rRNA. The polypeptide is Endoribonuclease YbeY (Corynebacterium jeikeium (strain K411)).